The sequence spans 251 residues: Flap endonuclease Xni (251 aa).

Aspartate 104 contributes to the Mg(2+) binding site. The 5'-3' exonuclease domain occupies 160–249 (VLPRQLPDYW…IDGNLQQLRL (90 aa)). Residues leucine 171, alanine 172, proline 180, valine 182, and isoleucine 185 each coordinate K(+). The interval 184–189 (GIGPKS) is interaction with DNA.

Belongs to the Xni family. Mg(2+) is required as a cofactor. The cofactor is K(+).

In terms of biological role, has flap endonuclease activity. During DNA replication, flap endonucleases cleave the 5'-overhanging flap structure that is generated by displacement synthesis when DNA polymerase encounters the 5'-end of a downstream Okazaki fragment. The protein is Flap endonuclease Xni of Salmonella dublin (strain CT_02021853).